A 209-amino-acid chain; its full sequence is Large ribosomal subunit protein uL3 (209 aa).

The segment at 133–153 is disordered; sequence THGNSLSHRVPGSIGQNQTPG. An N5-methylglutamine modification is found at Q150.

It belongs to the universal ribosomal protein uL3 family. As to quaternary structure, part of the 50S ribosomal subunit. Forms a cluster with proteins L14 and L19. Methylated by PrmB.

Functionally, one of the primary rRNA binding proteins, it binds directly near the 3'-end of the 23S rRNA, where it nucleates assembly of the 50S subunit. This is Large ribosomal subunit protein uL3 from Serratia proteamaculans (strain 568).